A 333-amino-acid chain; its full sequence is 4-hydroxy-3-methylbut-2-enyl diphosphate reductase (333 aa).

[4Fe-4S] cluster is bound at residue Cys-34. Residues His-63 and His-96 each contribute to the (2E)-4-hydroxy-3-methylbut-2-enyl diphosphate site. Residues His-63 and His-96 each coordinate dimethylallyl diphosphate. Isopentenyl diphosphate is bound by residues His-63 and His-96. Cys-118 provides a ligand contact to [4Fe-4S] cluster. His-146 contributes to the (2E)-4-hydroxy-3-methylbut-2-enyl diphosphate binding site. His-146 is a binding site for dimethylallyl diphosphate. His-146 serves as a coordination point for isopentenyl diphosphate. Residue Glu-148 is the Proton donor of the active site. Thr-186 serves as a coordination point for (2E)-4-hydroxy-3-methylbut-2-enyl diphosphate. Cys-216 contacts [4Fe-4S] cluster. Ser-244, Ser-245, Asn-246, and Ser-289 together coordinate (2E)-4-hydroxy-3-methylbut-2-enyl diphosphate. Residues Ser-244, Ser-245, Asn-246, and Ser-289 each contribute to the dimethylallyl diphosphate site. Residues Ser-244, Ser-245, Asn-246, and Ser-289 each contribute to the isopentenyl diphosphate site.

It belongs to the IspH family. It depends on [4Fe-4S] cluster as a cofactor.

It carries out the reaction isopentenyl diphosphate + 2 oxidized [2Fe-2S]-[ferredoxin] + H2O = (2E)-4-hydroxy-3-methylbut-2-enyl diphosphate + 2 reduced [2Fe-2S]-[ferredoxin] + 2 H(+). It catalyses the reaction dimethylallyl diphosphate + 2 oxidized [2Fe-2S]-[ferredoxin] + H2O = (2E)-4-hydroxy-3-methylbut-2-enyl diphosphate + 2 reduced [2Fe-2S]-[ferredoxin] + 2 H(+). Its pathway is isoprenoid biosynthesis; dimethylallyl diphosphate biosynthesis; dimethylallyl diphosphate from (2E)-4-hydroxy-3-methylbutenyl diphosphate: step 1/1. The protein operates within isoprenoid biosynthesis; isopentenyl diphosphate biosynthesis via DXP pathway; isopentenyl diphosphate from 1-deoxy-D-xylulose 5-phosphate: step 6/6. Catalyzes the conversion of 1-hydroxy-2-methyl-2-(E)-butenyl 4-diphosphate (HMBPP) into a mixture of isopentenyl diphosphate (IPP) and dimethylallyl diphosphate (DMAPP). Acts in the terminal step of the DOXP/MEP pathway for isoprenoid precursor biosynthesis. In Mycolicibacterium gilvum (strain PYR-GCK) (Mycobacterium gilvum (strain PYR-GCK)), this protein is 4-hydroxy-3-methylbut-2-enyl diphosphate reductase.